We begin with the raw amino-acid sequence, 185 residues long: Ribosome-recycling factor (185 aa).

Belongs to the RRF family.

It localises to the cytoplasm. Functionally, responsible for the release of ribosomes from messenger RNA at the termination of protein biosynthesis. May increase the efficiency of translation by recycling ribosomes from one round of translation to another. The protein is Ribosome-recycling factor of Xylella fastidiosa (strain 9a5c).